Consider the following 316-residue polypeptide: Pantothenate kinase (316 aa).

An ATP-binding site is contributed by 95 to 102 (GSVAVGKS).

It belongs to the prokaryotic pantothenate kinase family.

The protein localises to the cytoplasm. The catalysed reaction is (R)-pantothenate + ATP = (R)-4'-phosphopantothenate + ADP + H(+). It participates in cofactor biosynthesis; coenzyme A biosynthesis; CoA from (R)-pantothenate: step 1/5. This is Pantothenate kinase from Erwinia tasmaniensis (strain DSM 17950 / CFBP 7177 / CIP 109463 / NCPPB 4357 / Et1/99).